We begin with the raw amino-acid sequence, 269 residues long: Lipid II flippase Amj (269 aa).

Transmembrane regions (helical) follow at residues Met1–Ile21, Ser31–Val51, Phe84–Val104, Ala105–Phe125, Leu161–Tyr181, Thr192–Val212, and Val245–Leu265.

This sequence belongs to the Amj family.

It localises to the cell membrane. The protein operates within cell wall biogenesis; peptidoglycan biosynthesis. Functionally, involved in peptidoglycan biosynthesis. Transports lipid-linked peptidoglycan precursors from the inner to the outer leaflet of the cytoplasmic membrane. May serve as a defense mechanism against naturally occurring MurJ antagonists. In Bacillus subtilis (strain 168), this protein is Lipid II flippase Amj.